The primary structure comprises 144 residues: Prefoldin subunit alpha (144 aa).

The protein belongs to the prefoldin subunit alpha family. Heterohexamer of two alpha and four beta subunits.

The protein resides in the cytoplasm. In terms of biological role, molecular chaperone capable of stabilizing a range of proteins. Seems to fulfill an ATP-independent, HSP70-like function in archaeal de novo protein folding. The polypeptide is Prefoldin subunit alpha (Methanococcus maripaludis (strain DSM 14266 / JCM 13030 / NBRC 101832 / S2 / LL)).